A 238-amino-acid polypeptide reads, in one-letter code: 3-dehydroquinate dehydratase (238 aa).

3-dehydroquinate-binding positions include 35–37 and arginine 70; that span reads ELR. The active-site Proton donor/acceptor is the histidine 133. Lysine 160 (schiff-base intermediate with substrate) is an active-site residue. Arginine 202 and glutamine 225 together coordinate 3-dehydroquinate.

It belongs to the type-I 3-dehydroquinase family. In terms of assembly, homodimer.

It carries out the reaction 3-dehydroquinate = 3-dehydroshikimate + H2O. It functions in the pathway metabolic intermediate biosynthesis; chorismate biosynthesis; chorismate from D-erythrose 4-phosphate and phosphoenolpyruvate: step 3/7. Its function is as follows. Involved in the third step of the chorismate pathway, which leads to the biosynthesis of aromatic amino acids. Catalyzes the cis-dehydration of 3-dehydroquinate (DHQ) and introduces the first double bond of the aromatic ring to yield 3-dehydroshikimate. The chain is 3-dehydroquinate dehydratase from Staphylococcus aureus (strain MRSA252).